A 394-amino-acid polypeptide reads, in one-letter code: Glycerol-3-phosphate dehydrogenase [NAD(+)] 2 (394 aa).

Residues 41-46 (GSGNWG), Lys152, and Ala185 each bind NAD(+). Residue Lys152 participates in substrate binding. Catalysis depends on Lys243, which acts as the Proton acceptor. The NAD(+) site is built by Arg308 and Gln337. 308–309 (RN) provides a ligand contact to substrate.

The protein belongs to the NAD-dependent glycerol-3-phosphate dehydrogenase family.

The catalysed reaction is sn-glycerol 3-phosphate + NAD(+) = dihydroxyacetone phosphate + NADH + H(+). This Cyberlindnera jadinii (Torula yeast) protein is Glycerol-3-phosphate dehydrogenase [NAD(+)] 2 (gpd2).